The chain runs to 439 residues: ATP-dependent RNA helicase RhlB (439 aa).

The Q motif motif lies at 9 to 37; the sequence is QKFADLPLHPEVKQALAENGFEFCTPIQA. One can recognise a Helicase ATP-binding domain in the interval 40-219; it reads LPVLLQSKDI…YDHMNDPVKV (180 aa). Residue 53 to 60 coordinates ATP; sequence AQTGTGKT. Positions 165-168 match the DEAD box motif; sequence DEAD. A Helicase C-terminal domain is found at 243–390; that stretch reads KIRLLLTLIE…VSNYDRDALL (148 aa). The interval 395 to 439 is disordered; sequence PPVKIHRKHPAGARNLRERSGAGRPQGAHRSGGRPPRHDRTRRQP. Basic residues predominate over residues 425 to 439; sequence SGGRPPRHDRTRRQP.

Belongs to the DEAD box helicase family. RhlB subfamily. In terms of assembly, component of the RNA degradosome, which is a multiprotein complex involved in RNA processing and mRNA degradation.

Its subcellular location is the cytoplasm. It catalyses the reaction ATP + H2O = ADP + phosphate + H(+). Functionally, DEAD-box RNA helicase involved in RNA degradation. Has RNA-dependent ATPase activity and unwinds double-stranded RNA. The chain is ATP-dependent RNA helicase RhlB from Shewanella sp. (strain MR-4).